A 394-amino-acid chain; its full sequence is Na(+)/H(+) antiporter NhaA (394 aa).

Transmembrane regions (helical) follow at residues 14–34, 59–79, 95–115, 125–145, 155–175, 177–197, 204–224, 258–278, 292–312, 328–348, and 362–382; these read AGGI…NSVF, LLMW…GMEV, IFPA…YWFI, GWAI…ALLS, FLLA…ALFF, NELS…LITM, GIIH…KSGV, WCAF…SLAG, ITLG…YLAV, VFAI…IAGL, and LSRL…YILL.

It belongs to the NhaA Na(+)/H(+) (TC 2.A.33) antiporter family.

It is found in the cell inner membrane. The catalysed reaction is Na(+)(in) + 2 H(+)(out) = Na(+)(out) + 2 H(+)(in). In terms of biological role, na(+)/H(+) antiporter that extrudes sodium in exchange for external protons. The sequence is that of Na(+)/H(+) antiporter NhaA from Haemophilus ducreyi (strain 35000HP / ATCC 700724).